Reading from the N-terminus, the 691-residue chain is Pentatricopeptide repeat-containing protein At4g37170 (691 aa).

PPR repeat units follow at residues 84–118 (PAST…GFVP), 119–149 (GIVI…MPNR), 150–184 (DLCS…DSYS), 185–211 (WTAM…MQRV), 217–251 (NIFT…GLDS), 252–286 (DEVL…DVVS), 287–317 (WTSM…CERP), 318–352 (NEYT…GFDP), 353–383 (YSFA…CPKP), 384–418 (DLVS…GTKP), 419–449 (DHVT…ITEK), and 455–485 (TSDH…MPMK). The segment at 490–565 (LWASVLGGCS…RPGSSWTEIK (76 aa)) is type E motif. The interval 566-596 (RKRHVFIAADTSHPMYNQIVEFLRELRKKMK) is type E(+) motif. The interval 597-691 (EEGYVPATSL…NGQCSCGDYW (95 aa)) is type DYW motif.

Belongs to the PPR family. PCMP-H subfamily.

The polypeptide is Pentatricopeptide repeat-containing protein At4g37170 (PCMP-H5) (Arabidopsis thaliana (Mouse-ear cress)).